The primary structure comprises 341 residues: DNA-directed RNA polymerase subunit alpha (341 aa).

The segment at 1-233 (MLKDGTSVSN…DLLSPFLHTK (233 aa)) is alpha N-terminal domain (alpha-NTD). An alpha C-terminal domain (alpha-CTD) region spans residues 262-341 (SEGDFFKNTF…NEKPRVVGDE (80 aa)).

Belongs to the RNA polymerase alpha chain family. As to quaternary structure, in plastids the minimal PEP RNA polymerase catalytic core is composed of four subunits: alpha, beta, beta', and beta''. When a (nuclear-encoded) sigma factor is associated with the core the holoenzyme is formed, which can initiate transcription.

The protein resides in the plastid. Its subcellular location is the chloroplast. The enzyme catalyses RNA(n) + a ribonucleoside 5'-triphosphate = RNA(n+1) + diphosphate. Functionally, DNA-dependent RNA polymerase catalyzes the transcription of DNA into RNA using the four ribonucleoside triphosphates as substrates. The protein is DNA-directed RNA polymerase subunit alpha of Marsilea quadrifolia (European water clover).